The sequence spans 104 residues: Ubiquitin-related modifier 1 homolog (104 aa).

G104 carries the post-translational modification 1-thioglycine. G104 is covalently cross-linked (Glycyl lysine isopeptide (Gly-Lys) (interchain with K-? in acceptor proteins)).

Belongs to the URM1 family. Interacts with cer. In terms of processing, C-terminal thiocarboxylation occurs in 2 steps, it is first acyl-adenylated (-COAMP) via the hesA/moeB/thiF part of the MOCS3 homolog, then thiocarboxylated (-COSH) via the rhodanese domain of the MOCS3 homolog.

It is found in the cytoplasm. It participates in tRNA modification; 5-methoxycarbonylmethyl-2-thiouridine-tRNA biosynthesis. Acts as a sulfur carrier required for 2-thiolation of mcm(5)S(2)U at tRNA wobble positions of cytosolic tRNA(Lys), tRNA(Glu) and tRNA(Gln). Serves as sulfur donor in tRNA 2-thiolation reaction by being thiocarboxylated (-COSH) at its C-terminus by MOCS3. The sulfur is then transferred to tRNA to form 2-thiolation of mcm(5)S(2)U. Also acts as a ubiquitin-like protein (UBL) that is covalently conjugated via an isopeptide bond to lysine residues of target proteins such as Prx2/Jafrac1, Ciao1, Eip71CD and GILT1. The thiocarboxylated form serves as substrate for conjugation and oxidative stress specifically induces the formation of UBL-protein conjugates. The sequence is that of Ubiquitin-related modifier 1 homolog from Drosophila grimshawi (Hawaiian fruit fly).